The following is a 365-amino-acid chain: MKLSDFDFDLPSELIAQYPSSERDNSDLLIAVTPPIKTKFYNIIDYLKEGDLLVFNNSKVIKAKLNLGKNITINLNQKLSDDNWSAFAKPARKLHVNDEFYFDNHKVIITEKLAMGEIKVKFELNDISVFEFLNKYGEMPLPVYIRRSHSLCHPVATTTGSKTYLNNDWIPWSNHGMTNTQNDNDRYQTVYSQIEGSVAAPTAGLHFTKDILDKLKAEGIQATFLTLHVGAGTFLPVKTENIHEHKMHTEYCSITPDTAEIINKAKQEGKRIIAVGTTTLRTLESSCNNGIVKAGSFKTDIFITPGFKFQTADMLLTNFHFPKSTLFMLICAFAGFKEMHELYKYAIKEAMRFFSYGDATLLCRK.

It belongs to the QueA family. Monomer.

Its subcellular location is the cytoplasm. The catalysed reaction is 7-aminomethyl-7-carbaguanosine(34) in tRNA + S-adenosyl-L-methionine = epoxyqueuosine(34) in tRNA + adenine + L-methionine + 2 H(+). It participates in tRNA modification; tRNA-queuosine biosynthesis. Transfers and isomerizes the ribose moiety from AdoMet to the 7-aminomethyl group of 7-deazaguanine (preQ1-tRNA) to give epoxyqueuosine (oQ-tRNA). This Rickettsia conorii (strain ATCC VR-613 / Malish 7) protein is S-adenosylmethionine:tRNA ribosyltransferase-isomerase.